We begin with the raw amino-acid sequence, 1087 residues long: MSFDLESNSSGGSTIGRNSSIRLSSGLAPSESTVSLNEIIDLDREFELLLDKLAIEDPIKRKQMQSLPDISKRTLLEQNKADIYRTVKHKGPIESFADVKSVISSINTKHVPIDIIKTLRIHLNTADRDWIQSFLDNDGVQPILNILKRLERNKNRKRKEHSILQWECTRCIAALMKIKIGMEYIASFPQTTNLMVLCLDTPLIKAKTLVLELLAAIAVTDRGHGAVLTSMIYHKEVKKEITRYFNLVQSLKIEKNAEYLTTCMSFINCIISSPSDLPSRIEIRKAFLNLKILKYIENLRADYNEDKNLLTQLDVFEEELSTDEQLNSQQGTQIGIEDLFSQISSRVTGTPSQQELITLMTHFQRMSSSNLGLGVWTLYNALANQLEDELKIHPDLDVTLVSLLFPEVKKSSSGLFGFGSKSKSPSSSPALSSMAKTELKKDNEEKQKTIEHLLKQLNKFSGGQNTERWMIEREEKNKLIAQLMAQTKNGGGGGGGGVGGDSSLSNDEALKRENQLLRMEIENIKNNPSVLLNSGNSINGDVPNLFISSPGSTLSPSPSGEPPIPSTDFGITSSSIHTSTDKLTNSTEPILGSPPPPPPPPMSGGGGPPPPPPPPGGKSNKPAKPIIKPSVKMRNFNWITIPALKVQGTFWDKLDETSFIQSLDKVELESLFSAKAPTVKVESKQLTRKVVVTVIDMKKANNCAIMLQHFKIPNEQLKKMQIMLDEKHFSQENAIYLLQFAPTKEDIEAIKEYQGDQMQLGAAEQYMLTVMDIPKLDSRLKAFIFKQKFEGLVEDLVPDIKAIKAASLELKKSKRLSDILKFILAIGNYVNGSTTRGGAFGFKVLETLPKMRDARSNDNKLSLLHFLAKTLQDRIPEIWNIGAELPHIEHASEVSLNNIISDSSEIKRSIDLIERDFVPMINDPLFAHDKHWIHKITEFQKIAKVQYQRIEKEIDEMNKAFEEITSYFGEPKSTQPDVFFSTINNFLEDLEKAYGEYQAMIRKAELENSKMEDPEKGGLQDLSSQIRSGQLFKDRRVGDSVIAQMQNVDSLRKNLKSTSTTTPNTPPTIKIELPSQSILKPSGQLKK.

Polar residues predominate over residues 1 to 23 (MSFDLESNSSGGSTIGRNSSIRL). Residues 1–25 (MSFDLESNSSGGSTIGRNSSIRLSS) form a disordered region. The 361-residue stretch at 34 to 394 (VSLNEIIDLD…QLEDELKIHP (361 aa)) folds into the GBD/FH3 domain. 2 stretches are compositionally biased toward low complexity: residues 416-436 (FGFG…SMAK) and 549-558 (SPGSTLSPSP). Disordered regions lie at residues 416 to 445 (FGFG…DNEE), 549 to 625 (SPGS…PAKP), and 1048 to 1087 (VDSL…QLKK). A coiled-coil region spans residues 433 to 461 (SMAKTELKKDNEEKQKTIEHLLKQLNKFS). The span at 569–588 (FGITSSSIHTSTDKLTNSTE) shows a compositional bias: polar residues. The region spanning 589–615 (PILGSPPPPPPPPMSGGGGPPPPPPPP) is the FH1 domain. The span at 592–616 (GSPPPPPPPPMSGGGGPPPPPPPPG) shows a compositional bias: pro residues. An FH2 domain is found at 623–1016 (AKPIIKPSVK…ENSKMEDPEK (394 aa)). A DAD domain is found at 1013–1051 (DPEKGGLQDLSSQIRSGQLFKDRRVGDSVIAQMQNVDSL).

Belongs to the formin homology family. Diaphanous subfamily. As to quaternary structure, interacts with vasP, proB/profilin-2 and rac1A. Interacts (via GBD/FH3 domain) with activated Rho-GTPases.

The protein resides in the cytoplasm. The protein localises to the cell cortex. Its subcellular location is the cytoskeleton. Functionally, formins play an important role in the nucleation of actin and the formation of linear actin filaments. Important for cell migration and formation, elongation and maintenance of filopodia. Specifically controls filopodial dynamics by regulating actin turnover at the barbed ends of actin filaments. The sequence is that of Formin-H (forH) from Dictyostelium discoideum (Social amoeba).